The primary structure comprises 134 residues: Profilin-4 (134 aa).

Cys-13 and Cys-118 form a disulfide bridge. An Involved in PIP2 interaction motif is present at residues Ala-84–Thr-100. At Thr-114 the chain carries Phosphothreonine.

The protein belongs to the profilin family. As to quaternary structure, occurs in many kinds of cells as a complex with monomeric actin in a 1:1 ratio. In terms of processing, phosphorylated by MAP kinases.

It localises to the cytoplasm. Its subcellular location is the cytoskeleton. Functionally, binds to actin and affects the structure of the cytoskeleton. At high concentrations, profilin prevents the polymerization of actin, whereas it enhances it at low concentrations. The protein is Profilin-4 of Olea europaea (Common olive).